Here is a 477-residue protein sequence, read N- to C-terminus: UDP-N-acetylmuramate--L-alanine ligase (477 aa).

Gly-112 to Thr-118 provides a ligand contact to ATP.

Belongs to the MurCDEF family.

It localises to the cytoplasm. It carries out the reaction UDP-N-acetyl-alpha-D-muramate + L-alanine + ATP = UDP-N-acetyl-alpha-D-muramoyl-L-alanine + ADP + phosphate + H(+). The protein operates within cell wall biogenesis; peptidoglycan biosynthesis. In terms of biological role, cell wall formation. The protein is UDP-N-acetylmuramate--L-alanine ligase of Cupriavidus necator (strain ATCC 17699 / DSM 428 / KCTC 22496 / NCIMB 10442 / H16 / Stanier 337) (Ralstonia eutropha).